Here is a 557-residue protein sequence, read N- to C-terminus: BZIP-type transcription factor MBZ1 (557 aa).

The span at 171 to 194 (AKAQAQQRQQQQQQQLIQQTQRQT) shows a compositional bias: low complexity. Disordered stretches follow at residues 171–209 (AKAQ…TDPI) and 221–273 (MRAK…RQLR). Over residues 229 to 240 (EPESQSVLNNLP) the composition is skewed to polar residues. The segment covering 254–271 (RLLASEEGKKLSSKERRQ) has biased composition (basic and acidic residues). Residues 264-327 (LSSKERRQLR…KRLSDLTRML (64 aa)) form the bZIP domain. The segment at 267–286 (KERRQLRNKVSARAFRSRRK) is basic motif. Positions 289–296 (ISQLEAEI) are leucine-zipper. Positions 344–364 (PTGLPQGSPVKIEQNPQQEQN) are disordered.

It localises to the nucleus. Functionally, BZIP-type transcription factor that functions as either an activator or a suppressor, and which contributes to the regulation of fungal growth, conidiation, cell wall integrity, and virulence. Plays a key role in virulence against insects by mediating cell wall integrity, cell surface hydrophobicity, and adherence to hydrophobic surfaces. Exhibits negative regulation of subtilisin proteases, but positive control of an adhesin gene. The sequence is that of BZIP-type transcription factor MBZ1 from Metarhizium robertsii (strain ARSEF 23 / ATCC MYA-3075) (Metarhizium anisopliae (strain ARSEF 23)).